The chain runs to 87 residues: MAHKKGVGSSRNGRDSNPKYLGVKIFGGQAIEAGNIIVRQRGTQFHPGSGVGLGRDHTLFALVDGKVEFSVKGAKKRRTVSVVSVEA.

Belongs to the bacterial ribosomal protein bL27 family.

This is Large ribosomal subunit protein bL27 from Stenotrophomonas maltophilia (strain R551-3).